The sequence spans 233 residues: Histone H1-I (233 aa).

2 disordered regions span residues 1–55 (MSDS…HPPV) and 115–233 (TGAS…KKSK). A compositionally biased stretch (low complexity) spans 17-29 (KAASPAKSPAKSP). An H15 domain is found at 51–125 (THPPVSEMVV…GASGSFKMPP (75 aa)). Basic and acidic residues-rich tracts occupy residues 128–137 (KKVDRPESAP) and 146–155 (TRVERKEKKV). Basic residues-rich tracts occupy residues 172 to 213 (AAKK…KPTP) and 223 to 233 (AAARKPAKKSK).

Belongs to the histone H1/H5 family.

Its subcellular location is the nucleus. It localises to the chromosome. Its function is as follows. Histones H1 are necessary for the condensation of nucleosome chains into higher-order structures. In Glyptotendipes barbipes (Midge), this protein is Histone H1-I.